Consider the following 580-residue polypeptide: 2-succinyl-5-enolpyruvyl-6-hydroxy-3-cyclohexene-1-carboxylate synthase (580 aa).

The protein belongs to the TPP enzyme family. MenD subfamily. In terms of assembly, homodimer. Mg(2+) serves as cofactor. The cofactor is Mn(2+). Requires thiamine diphosphate as cofactor.

The catalysed reaction is isochorismate + 2-oxoglutarate + H(+) = 5-enolpyruvoyl-6-hydroxy-2-succinyl-cyclohex-3-ene-1-carboxylate + CO2. Its pathway is quinol/quinone metabolism; 1,4-dihydroxy-2-naphthoate biosynthesis; 1,4-dihydroxy-2-naphthoate from chorismate: step 2/7. It functions in the pathway quinol/quinone metabolism; menaquinone biosynthesis. Its function is as follows. Catalyzes the thiamine diphosphate-dependent decarboxylation of 2-oxoglutarate and the subsequent addition of the resulting succinic semialdehyde-thiamine pyrophosphate anion to isochorismate to yield 2-succinyl-5-enolpyruvyl-6-hydroxy-3-cyclohexene-1-carboxylate (SEPHCHC). The chain is 2-succinyl-5-enolpyruvyl-6-hydroxy-3-cyclohexene-1-carboxylate synthase from Listeria monocytogenes serotype 4b (strain F2365).